Reading from the N-terminus, the 177-residue chain is MNWFGSNFFRCPEDLSLLNIYSPLLSHMSSEDEHFISNLRGHVPASAVVKQPVRGASGRTTITAIVQTGGGWSTGLFSVCRDRRICFCGLFCPMCLECDIARHYGECLCWPLLPGSTFALRIGTRERHKIQGTLCEDWLAVHCCWAFSICQVARELKMRTSQVYEICAVPMTKDTLV.

Belongs to the cornifelin family.

This is PLAC8-like protein 1 (PLAC8L1) from Homo sapiens (Human).